The primary structure comprises 224 residues: UPF0758 protein AHA_0160 (224 aa).

Residues 102-224 (PLTSPQLTRD…TVSFAERGWL (123 aa)) enclose the MPN domain. Residues H173, H175, and D186 each coordinate Zn(2+). The JAMM motif signature appears at 173–186 (HNHPSGVAEPSRAD).

This sequence belongs to the UPF0758 family.

This is UPF0758 protein AHA_0160 from Aeromonas hydrophila subsp. hydrophila (strain ATCC 7966 / DSM 30187 / BCRC 13018 / CCUG 14551 / JCM 1027 / KCTC 2358 / NCIMB 9240 / NCTC 8049).